We begin with the raw amino-acid sequence, 306 residues long: Porphobilinogen deaminase (306 aa).

At cysteine 239 the chain carries S-(dipyrrolylmethanemethyl)cysteine.

It belongs to the HMBS family. Monomer. It depends on dipyrromethane as a cofactor.

It catalyses the reaction 4 porphobilinogen + H2O = hydroxymethylbilane + 4 NH4(+). It functions in the pathway porphyrin-containing compound metabolism; protoporphyrin-IX biosynthesis; coproporphyrinogen-III from 5-aminolevulinate: step 2/4. Tetrapolymerization of the monopyrrole PBG into the hydroxymethylbilane pre-uroporphyrinogen in several discrete steps. This Helicobacter pylori (strain Shi470) protein is Porphobilinogen deaminase.